Reading from the N-terminus, the 175-residue chain is NADH-quinone oxidoreductase subunit I (175 aa).

4Fe-4S ferredoxin-type domains lie at 69–98 (KRDE…IEAG) and 115–144 (KKFE…LDGP). C78, C81, C84, C88, C124, C127, C130, and C134 together coordinate [4Fe-4S] cluster.

The protein belongs to the complex I 23 kDa subunit family. In terms of assembly, NDH-1 is composed of 14 different subunits. Subunits NuoA, H, J, K, L, M, N constitute the membrane sector of the complex. Requires [4Fe-4S] cluster as cofactor.

It localises to the cell inner membrane. The catalysed reaction is a quinone + NADH + 5 H(+)(in) = a quinol + NAD(+) + 4 H(+)(out). Functionally, NDH-1 shuttles electrons from NADH, via FMN and iron-sulfur (Fe-S) centers, to quinones in the respiratory chain. The immediate electron acceptor for the enzyme in this species is believed to be ubiquinone. Couples the redox reaction to proton translocation (for every two electrons transferred, four hydrogen ions are translocated across the cytoplasmic membrane), and thus conserves the redox energy in a proton gradient. This is NADH-quinone oxidoreductase subunit I from Leptospira borgpetersenii serovar Hardjo-bovis (strain JB197).